The following is a 334-amino-acid chain: B3 domain-containing protein LOC_Os12g40090 (334 aa).

The TF-B3 1 DNA-binding region spans 5-102; it reads RIRFFRLMTG…SFDVLIFDAS (98 aa). Residues 142-178 are disordered; it reads TSTPSVLIGSPHKASTSKKLSGKTKTNPRKEPEDPNC. Residues 154–166 show a composition bias toward low complexity; the sequence is KASTSKKLSGKTK. The segment at residues 227–326 is a DNA-binding region (TF-B3 2); it reads FVVVLQTAHV…TMTVHVIGKA (100 aa).

It localises to the nucleus. The protein is B3 domain-containing protein LOC_Os12g40090 of Oryza sativa subsp. japonica (Rice).